Reading from the N-terminus, the 443-residue chain is Threonine/serine transporter TdcC (443 aa).

A run of 11 helical transmembrane segments spans residues 22-42 (TTWT…FFPI), 44-64 (AGFG…PIAF), 97-117 (GVVI…IYGV), 140-160 (VVAL…KDLM), 163-183 (VMSY…LSLI), 207-227 (ILVT…FSPI), 259-279 (ASML…FTLS), 319-339 (ASII…LGTL), 366-386 (ISMI…PNIL), 389-409 (IEAM…MYAI), and 423-443 (DNVF…YKLF).

This sequence belongs to the amino acid/polyamine transporter 2 family. SdaC/TdcC subfamily.

Its subcellular location is the cell inner membrane. The catalysed reaction is L-threonine(in) + H(+)(in) = L-threonine(out) + H(+)(out). It carries out the reaction L-serine(in) + H(+)(in) = L-serine(out) + H(+)(out). Functionally, involved in the import of threonine and serine into the cell, with the concomitant import of a proton (symport system). This chain is Threonine/serine transporter TdcC, found in Salmonella arizonae (strain ATCC BAA-731 / CDC346-86 / RSK2980).